Here is a 199-residue protein sequence, read N- to C-terminus: Fe/S biogenesis protein NfuA (199 aa).

Cysteine 156 and cysteine 159 together coordinate [4Fe-4S] cluster.

Belongs to the NfuA family. Homodimer. The cofactor is [4Fe-4S] cluster.

Its function is as follows. Involved in iron-sulfur cluster biogenesis. Binds a 4Fe-4S cluster, can transfer this cluster to apoproteins, and thereby intervenes in the maturation of Fe/S proteins. Could also act as a scaffold/chaperone for damaged Fe/S proteins. This is Fe/S biogenesis protein NfuA from Actinobacillus pleuropneumoniae serotype 5b (strain L20).